A 396-amino-acid chain; its full sequence is B2 bradykinin receptor (396 aa).

The Extracellular portion of the chain corresponds to methionine 1 to glutamine 65. 2 N-linked (GlcNAc...) asparagine glycosylation sites follow: asparagine 33 and asparagine 44. Residues alanine 66–leucine 89 traverse the membrane as a helical segment. Residues histidine 90–glutamate 98 lie on the Cytoplasmic side of the membrane. The helical transmembrane segment at isoleucine 99–alanine 123 threads the bilayer. The Extracellular segment spans residues asparagine 124–arginine 136. A disulfide bond links cysteine 135 and cysteine 216. A helical membrane pass occupies residues valine 137–isoleucine 158. The Cytoplasmic portion of the chain corresponds to aspartate 159–lysine 180. Tyrosine 161 is subject to Phosphotyrosine. The chain crosses the membrane as a helical span at residues leucine 181–methionine 203. The Extracellular segment spans residues lysine 204 to glutamate 226. An N-linked (GlcNAc...) asparagine glycan is attached at asparagine 212. A helical transmembrane segment spans residues valine 227 to methionine 253. Residues glutamine 254 to lysine 272 lie on the Cytoplasmic side of the membrane. Residues alanine 273–leucine 297 traverse the membrane as a helical segment. Residues aspartate 298–aspartate 316 lie on the Extracellular side of the membrane. The helical transmembrane segment at isoleucine 317 to valine 340 threads the bilayer. Residues glycine 341 to glutamine 396 lie on the Cytoplasmic side of the membrane. A Phosphotyrosine modification is found at tyrosine 352. Cysteine 356 is lipidated: S-palmitoyl cysteine. Serine 365 and serine 371 each carry phosphoserine. A Phosphothreonine modification is found at threonine 374. A phosphoserine; by GRK6 mark is found at serine 378 and serine 380.

Belongs to the G-protein coupled receptor 1 family. Bradykinin receptor subfamily. BDKRB2 sub-subfamily. Forms a complex with PECAM1 and GNAQ. Interacts with PECAM1. Diphosphorylation at Ser-365 and Ser-371, at Ser-378 and Ser-380, and at Thr-374 and Ser-380 seem to be correlated pairwise. Post-translationally, palmitoylation at Cys-356 and phosphorylation at Tyr-352 seem to be mutually exclusive. Uterus, vas deferens, kidney, ileum, heart, testis, lung and brain.

It localises to the cell membrane. Functionally, receptor for bradykinin. It is associated with G proteins that activate a phosphatidylinositol-calcium second messenger system. The chain is B2 bradykinin receptor (Bdkrb2) from Rattus norvegicus (Rat).